The sequence spans 598 residues: Probable translation initiation factor IF-2 (598 aa).

A tr-type G domain is found at 8-226; that stretch reads IRQPIISVLG…VTGLAQRFLE (219 aa). Residues 17 to 24 form a G1 region; that stretch reads GHVDHGKT. 17 to 24 provides a ligand contact to GTP; it reads GHVDHGKT. Residues 42–46 form a G2 region; the sequence is GITQH. The segment at 81 to 84 is G3; that stretch reads DTPG. GTP contacts are provided by residues 81-85 and 135-138; these read DTPGH and NKVD. The segment at 135–138 is G4; the sequence is NKVD. The G5 stretch occupies residues 203–205; that stretch reads SGV.

Belongs to the TRAFAC class translation factor GTPase superfamily. Classic translation factor GTPase family. IF-2 subfamily.

In terms of biological role, function in general translation initiation by promoting the binding of the formylmethionine-tRNA to ribosomes. Seems to function along with eIF-2. This is Probable translation initiation factor IF-2 from Methanopyrus kandleri (strain AV19 / DSM 6324 / JCM 9639 / NBRC 100938).